We begin with the raw amino-acid sequence, 132 residues long: uncharacterized protein (132 aa).

The protein to M.jannaschii MJ0661.

This is an uncharacterized protein from Helicobacter pylori (strain J99 / ATCC 700824) (Campylobacter pylori J99).